We begin with the raw amino-acid sequence, 202 residues long: Na(+)-translocating NADH-quinone reductase subunit E (202 aa).

The next 6 helical transmembrane spans lie at 11–31 (SIFM…FLAV), 41–61 (LGVA…IIYF), 81–101 (FLGF…LEMV), 114–134 (GIYL…LFMV), 144–164 (LVYG…LAGI), and 180–200 (LGIT…FSGI).

Belongs to the NqrDE/RnfAE family. Composed of six subunits; NqrA, NqrB, NqrC, NqrD, NqrE and NqrF.

It localises to the cell inner membrane. The catalysed reaction is a ubiquinone + n Na(+)(in) + NADH + H(+) = a ubiquinol + n Na(+)(out) + NAD(+). Its function is as follows. NQR complex catalyzes the reduction of ubiquinone-1 to ubiquinol by two successive reactions, coupled with the transport of Na(+) ions from the cytoplasm to the periplasm. NqrA to NqrE are probably involved in the second step, the conversion of ubisemiquinone to ubiquinol. In Psychromonas ingrahamii (strain DSM 17664 / CCUG 51855 / 37), this protein is Na(+)-translocating NADH-quinone reductase subunit E.